The sequence spans 205 residues: Putative 3-methyladenine DNA glycosylase (205 aa).

Belongs to the DNA glycosylase MPG family.

The chain is Putative 3-methyladenine DNA glycosylase from Clostridium perfringens (strain SM101 / Type A).